Consider the following 554-residue polypeptide: Malate synthase 1 (554 aa).

R177 serves as the catalytic Proton acceptor. The active-site Proton donor is the D457. The short motif at 552 to 554 (SKL) is the SKL peroxisome targeting motif element.

This sequence belongs to the malate synthase family. As to quaternary structure, interacts with PEX9.

Its subcellular location is the peroxisome matrix. The catalysed reaction is glyoxylate + acetyl-CoA + H2O = (S)-malate + CoA + H(+). It participates in carbohydrate metabolism; glyoxylate cycle; (S)-malate from isocitrate: step 2/2. In terms of biological role, malate synthase which takes part in the glyoxylate cycle. MLS1 activity is essential for cells to grow on oleic acid as a sole carbon source. Two steps of the glyoxylate cycle take place in the cytosol, the splitting of isocitrate into succinate and glyoxylate, and the dehydrogenation of malate to oxaloacetate. However, the formation of malate from glyoxylate and acetyl-CoA undertaken MLS1, occurs in the peroxisomes when cells are grown on oleic acid. The source of acetyl-CoA being either peroxisomal when breaking down fatty acids, or cytosolic when extra-cellular two-carbon substrates are used, therefore, although not strictly essential, the peroxisomal localization of MLS1 appears to be advantageous for cells growing on oleic acid, in that acetyl-CoA production and utilization are thereby intimately compartmentalized together to increase efficiency. The chain is Malate synthase 1 from Saccharomyces cerevisiae (strain YJM789) (Baker's yeast).